The primary structure comprises 678 residues: DNA ligase (678 aa).

NAD(+) contacts are provided by residues 35 to 39 (DEEYD), 84 to 85 (SL), and E115. K117 serves as the catalytic N6-AMP-lysine intermediate. R138, E172, K288, and K312 together coordinate NAD(+). Residues C406, C409, C425, and C430 each contribute to the Zn(2+) site. Residues 589-678 (VQSKILSNLT…IKNLRQQKLF (90 aa)) enclose the BRCT domain.

Belongs to the NAD-dependent DNA ligase family. LigA subfamily. Requires Mg(2+) as cofactor. The cofactor is Mn(2+).

The enzyme catalyses NAD(+) + (deoxyribonucleotide)n-3'-hydroxyl + 5'-phospho-(deoxyribonucleotide)m = (deoxyribonucleotide)n+m + AMP + beta-nicotinamide D-nucleotide.. Functionally, DNA ligase that catalyzes the formation of phosphodiester linkages between 5'-phosphoryl and 3'-hydroxyl groups in double-stranded DNA using NAD as a coenzyme and as the energy source for the reaction. It is essential for DNA replication and repair of damaged DNA. This chain is DNA ligase, found in Pseudothermotoga lettingae (strain ATCC BAA-301 / DSM 14385 / NBRC 107922 / TMO) (Thermotoga lettingae).